The following is a 618-amino-acid chain: MMFDRRFFALVVLLCVSAVRSTEDASDDELNYEMDEGVVVLTDKNFDAFLKKNPSVLVKFYAPWCGHCKHLAPEYEKASSKVSIPLAKVDATVETELGKRFEIQGYPTLKFWKDGKGPNDYDGGRDEAGIVEWVESRVDPNYKPPPEEVVTLTTENFDDFISNNELVLVEFYAPWCGHCKKLAPEYEKAAQKLKAQGSKVKLGKVDATIEKDLGTKYGVSGYPTMKIIRNGRRFDYNGPREAAGIIKYMTDQSKPAAKKLPKLKDVERFMSKDDVTIIGFFATEDSTAFEAFSDSAEMLREEFKTMGHTSDPAAFKKWDAKPNDIIIFYPSLFHSKFEPKSRTYNKAAATSEDLLAFFREHSAPLVGKMTKKNAATRYTKKPLVVVYYNADFSVQYREGSEYWRSKVLNIAQKYQKDKYKFAVADEEEFAKELEELGLGDSGLEHNVVVFGYDGKKYPMNPDEFDGELDENLEAFMKQISSGKAKAHVKSAPAPKDDKGPVKTVVGSNFDKIVNDESKDVLIEFYAPWCGHCKSFESKYVELAQALKKTQPNVVLAKMDATINDAPSQFAVEGFPTIYFAPAGKKSEPIKYSGNRDLEDLKKFMTKHGVKSFQKKDEL.

A signal peptide spans 1–21 (MMFDRRFFALVVLLCVSAVRS). 3 consecutive Thioredoxin domains span residues 22 to 139 (TEDA…SRVD), 138 to 254 (VDPN…DQSK), and 480 to 609 (SSGK…KHGV). 3 cysteine pairs are disulfide-bonded: Cys-65-Cys-68, Cys-176-Cys-179, and Cys-529-Cys-532. The Prevents secretion from ER motif lies at 615 to 618 (KDEL).

The protein belongs to the protein disulfide isomerase family.

It is found in the endoplasmic reticulum lumen. The catalysed reaction is Catalyzes the rearrangement of -S-S- bonds in proteins.. The sequence is that of Probable protein disulfide-isomerase A4 from Caenorhabditis elegans.